The primary structure comprises 204 residues: Methyl-CpG-binding domain protein 3-like 2B (204 aa).

Residues serine 126–serine 137 show a composition bias toward basic and acidic residues. The tract at residues serine 126–arginine 145 is disordered.

This sequence belongs to the MBD3L family.

The protein is Methyl-CpG-binding domain protein 3-like 2B of Homo sapiens (Human).